Reading from the N-terminus, the 914-residue chain is Coatomer subunit beta' (914 aa).

WD repeat units follow at residues 13-54, 55-94, 97-136, 140-180, 183-224, 227-266, and 352-390; these read SRSD…KDFE, VCDV…KVHS, AHSD…ACQR, GHTH…ANFT, GHEK…CVQT, GHAQ…LETC, and ACEI…NKAF.

This sequence belongs to the WD repeat COPB2 family. Oligomeric complex that consists of at least the alpha, beta, beta', gamma, delta, epsilon and zeta subunits.

The protein resides in the cytoplasm. It localises to the golgi apparatus membrane. Its subcellular location is the cytoplasmic vesicle. The protein localises to the COPI-coated vesicle membrane. Functionally, the coatomer is a cytosolic protein complex that binds to dilysine motifs and reversibly associates with Golgi non-clathrin-coated vesicles, which further mediate biosynthetic protein transport from the ER, via the Golgi up to the trans Golgi network. Coatomer complex is required for budding from Golgi membranes, and is essential for the retrograde Golgi-to-ER transport of dilysine-tagged proteins. In Drosophila melanogaster (Fruit fly), this protein is Coatomer subunit beta'.